The following is a 194-amino-acid chain: MPQLQKPAPAFAGTAVVNGVFKDIKLSDYKGKYLVLFFYPLDFTFVCPTEIIAFSESAAEFRKINCEVIGCSTDSQFTHLAWINTPRKQGGLGSMDIPLLADKSMKVARDYGVLDEETGIPFRGLFIIDDKQNLRQITVNDLPVGRSVEETLRLVQAFQYTDKYGEVCPANWKPGQKTMVADPTKSKEYFETTS.

Residues 2 to 160 (PQLQKPAPAF…TLRLVQAFQY (159 aa)) form the Thioredoxin domain. The active-site Cysteine sulfenic acid (-SOH) intermediate is the Cys47. Residue Thr193 is modified to Phosphothreonine. At Ser194 the chain carries Phosphoserine.

Belongs to the peroxiredoxin family. AhpC/Prx1 subfamily. As to quaternary structure, homodimer; disulfide-linked, upon oxidation. 5 homodimers assemble to form a ring-like decamer. Also exists as a monomer. Post-translationally, the enzyme can be inactivated by further oxidation of the cysteine sulfenic acid (C(P)-SOH) to sulphinic acid (C(P)-SO2H) instead of its condensation to a disulfide bond. It can be reactivated by forming a transient disulfide bond with sulfiredoxin SRXN1, which reduces the cysteine sulfinic acid in an ATP- and Mg-dependent manner. Conjugated to URM1, a ubiquitin-like protein. Detected in the head and body (at protein level).

The protein resides in the cytoplasm. The catalysed reaction is a hydroperoxide + [thioredoxin]-dithiol = an alcohol + [thioredoxin]-disulfide + H2O. Thiol-specific peroxidase that catalyzes the reduction of hydrogen peroxide and organic hydroperoxides to water and alcohols, respectively. Plays a role in cell protection against oxidative stress by detoxifying peroxides and as sensor of hydrogen peroxide-mediated signaling events. Might participate in the signaling cascades of growth factors and tumor necrosis factor-alpha by regulating the intracellular concentrations of H(2)O(2). Reduces an intramolecular disulfide bond in GDPD5 that gates the ability to GDPD5 to drive postmitotic motor neuron differentiation. The sequence is that of Peroxiredoxin 2 from Drosophila melanogaster (Fruit fly).